Here is a 199-residue protein sequence, read N- to C-terminus: Superoxide dismutase [Fe] (199 aa).

Residues His-27, His-74, Asp-158, and His-162 each coordinate Fe cation.

Belongs to the iron/manganese superoxide dismutase family. Homodimer. It depends on Fe cation as a cofactor.

It carries out the reaction 2 superoxide + 2 H(+) = H2O2 + O2. Its function is as follows. Destroys superoxide anion radicals which are normally produced within the cells and which are toxic to biological systems. The protein is Superoxide dismutase [Fe] (SODB) of Babesia bovis.